A 120-amino-acid chain; its full sequence is UPF0344 protein LMOf2365_2298 (120 aa).

Helical transmembrane passes span 3–23, 33–53, 62–82, and 92–112; these read GYIHLISWVAIVVLTVTALLI, MLQMINRVFYILVILSGIMMV, ILAIFKILMGIIVIGVVEMLL, and GMFLMIFVIVVVITISLGFYL.

It belongs to the UPF0344 family.

Its subcellular location is the cell membrane. The chain is UPF0344 protein LMOf2365_2298 from Listeria monocytogenes serotype 4b (strain F2365).